The following is a 251-amino-acid chain: Regulator of G-protein signaling 9-binding protein C (251 aa).

Residues methionine 1–glutamine 230 are Cytoplasmic-facing. Coiled coils occupy residues leucine 53 to arginine 94 and alanine 158 to asparagine 187. Residues leucine 231–isoleucine 250 traverse the membrane as a helical; Anchor for type IV membrane protein segment. Leucine 251 is a topological domain (extracellular).

It belongs to the RGS7BP/RGS9BP family.

It is found in the membrane. In terms of biological role, regulator of G protein-coupled receptor (GPCR) signaling. Probably acts by regulating the activity of some 'R7' family protein (RGS6, RGS7, RGS9 and/or RGS11). In Xenopus laevis (African clawed frog), this protein is Regulator of G-protein signaling 9-binding protein C (rgs9bp-c).